Reading from the N-terminus, the 303-residue chain is Coenzyme PQQ synthesis protein B (303 aa).

Belongs to the PqqB family.

Its pathway is cofactor biosynthesis; pyrroloquinoline quinone biosynthesis. Its function is as follows. May be involved in the transport of PQQ or its precursor to the periplasm. The polypeptide is Coenzyme PQQ synthesis protein B (Pseudomonas putida (strain ATCC 700007 / DSM 6899 / JCM 31910 / BCRC 17059 / LMG 24140 / F1)).